Reading from the N-terminus, the 396-residue chain is NADH-quinone oxidoreductase subunit D (396 aa).

Belongs to the complex I 49 kDa subunit family. NDH-1 is composed of 14 different subunits. Subunits NuoB, C, D, E, F, and G constitute the peripheral sector of the complex.

The protein resides in the cell inner membrane. The enzyme catalyses a quinone + NADH + 5 H(+)(in) = a quinol + NAD(+) + 4 H(+)(out). NDH-1 shuttles electrons from NADH, via FMN and iron-sulfur (Fe-S) centers, to quinones in the respiratory chain. The immediate electron acceptor for the enzyme in this species is believed to be ubiquinone. Couples the redox reaction to proton translocation (for every two electrons transferred, four hydrogen ions are translocated across the cytoplasmic membrane), and thus conserves the redox energy in a proton gradient. The protein is NADH-quinone oxidoreductase subunit D of Brucella canis (strain ATCC 23365 / NCTC 10854 / RM-666).